A 450-amino-acid chain; its full sequence is UDP-N-acetylmuramoylalanine--D-glutamate ligase (450 aa).

111-117 (GTNGKST) serves as a coordination point for ATP.

Belongs to the MurCDEF family.

Its subcellular location is the cytoplasm. The catalysed reaction is UDP-N-acetyl-alpha-D-muramoyl-L-alanine + D-glutamate + ATP = UDP-N-acetyl-alpha-D-muramoyl-L-alanyl-D-glutamate + ADP + phosphate + H(+). It functions in the pathway cell wall biogenesis; peptidoglycan biosynthesis. Its function is as follows. Cell wall formation. Catalyzes the addition of glutamate to the nucleotide precursor UDP-N-acetylmuramoyl-L-alanine (UMA). In Rickettsia bellii (strain RML369-C), this protein is UDP-N-acetylmuramoylalanine--D-glutamate ligase.